The chain runs to 228 residues: Ribulose-phosphate 3-epimerase (228 aa).

Ser9 is a substrate binding site. Residues His34, Asp36, His68, and Asp177 each coordinate a divalent metal cation. Asp36 acts as the Proton acceptor in catalysis. Substrate contacts are provided by residues His68, 177 to 179, and 199 to 200; these read DGG and GS. Catalysis depends on Asp177, which acts as the Proton donor.

It belongs to the ribulose-phosphate 3-epimerase family. The cofactor is a divalent metal cation.

The catalysed reaction is D-ribulose 5-phosphate = D-xylulose 5-phosphate. The protein operates within carbohydrate degradation. Its function is as follows. Catalyzes the reversible epimerization of D-ribulose 5-phosphate to D-xylulose 5-phosphate. The sequence is that of Ribulose-phosphate 3-epimerase from Buchnera aphidicola subsp. Acyrthosiphon pisum (strain APS) (Acyrthosiphon pisum symbiotic bacterium).